Consider the following 124-residue polypeptide: Small ribosomal subunit protein bS16 (124 aa).

Residues A80–E124 are disordered. Over residues K99–E113 the composition is skewed to basic and acidic residues. The segment covering A114 to E124 has biased composition (low complexity).

It belongs to the bacterial ribosomal protein bS16 family.

This chain is Small ribosomal subunit protein bS16, found in Rhizobium meliloti (strain 1021) (Ensifer meliloti).